A 498-amino-acid polypeptide reads, in one-letter code: 3-octaprenyl-4-hydroxybenzoate carboxy-lyase (498 aa).

Residue N175 coordinates Mn(2+). Prenylated FMN contacts are provided by residues 178 to 180, 192 to 194, and 197 to 198; these read IYR, RWL, and RG. E241 is a binding site for Mn(2+). D290 serves as the catalytic Proton donor.

This sequence belongs to the UbiD family. Homohexamer. Prenylated FMN is required as a cofactor. It depends on Mn(2+) as a cofactor.

Its subcellular location is the cell membrane. The enzyme catalyses a 4-hydroxy-3-(all-trans-polyprenyl)benzoate + H(+) = a 2-(all-trans-polyprenyl)phenol + CO2. It participates in cofactor biosynthesis; ubiquinone biosynthesis. Catalyzes the decarboxylation of 3-octaprenyl-4-hydroxy benzoate to 2-octaprenylphenol, an intermediate step in ubiquinone biosynthesis. The protein is 3-octaprenyl-4-hydroxybenzoate carboxy-lyase of Yersinia pseudotuberculosis serotype I (strain IP32953).